Consider the following 493-residue polypeptide: Succinate-semialdehyde dehydrogenase [NADP(+)] 2 (493 aa).

242–247 (GSTNVG) contributes to the NAD(+) binding site. Glutamate 264 is a catalytic residue. Cysteine 298 functions as the Nucleophile in the catalytic mechanism.

This sequence belongs to the aldehyde dehydrogenase family. As to quaternary structure, homotetramer.

The protein resides in the cytoplasm. It carries out the reaction succinate semialdehyde + NAD(+) + H2O = succinate + NADH + 2 H(+). It catalyses the reaction succinate semialdehyde + NADP(+) + H2O = succinate + NADPH + 2 H(+). It participates in amino-acid degradation; 4-aminobutanoate degradation. Functionally, catalyzes the oxidation of succinate semialdehyde to succinate. Can utilize both NAD(+) or NADP(+) as a coenzyme. Functions in the GABA shunt, which allows to bypass 2 reactions in the TCA cycle by removing alpha-ketoglutarate from the cycle and feeding succinate and NADH back into the cycle. This is Succinate-semialdehyde dehydrogenase [NADP(+)] 2 (ssd2) from Schizosaccharomyces pombe (strain 972 / ATCC 24843) (Fission yeast).